Consider the following 302-residue polypeptide: MGKSSNIVFDRIKEERQMLSFFKIFQRADLSSDCMRALPYSFISKVSEKDFSYKMVIRAQWGKTWDVEVSKNPTYYYIETRGWDLFVSDNALGQNEFITFTHRGNMVFHVNIYEQNGLEMRKPRKFQTMGPSSGIKKEEGENSLIDVKKEEESDESPGRAEFLVRKKKTEDSKSSKKKMTRNKVKKKSKSKSKQVLDGVPEFKITIRKSYLKFLAIPKHFVDDHIPNKSKIFTIRHPNGGSWKVLCLVREIRTIFSGGYSKLAREFPLMVGDKCTFKLIKPFEFVLLTSKKNREKMDQCMID.

The segment at residues 21–116 is a DNA-binding region (TF-B3 1); it reads FFKIFQRADL…VFHVNIYEQN (96 aa). A disordered region spans residues 123-192; the sequence is PRKFQTMGPS…KVKKKSKSKS (70 aa). The span at 135–174 shows a compositional bias: basic and acidic residues; that stretch reads IKKEEGENSLIDVKKEEESDESPGRAEFLVRKKKTEDSKS. Over residues 175-192 the composition is skewed to basic residues; the sequence is SKKKMTRNKVKKKSKSKS. Residues 199–292 constitute a DNA-binding region (TF-B3 2); the sequence is VPEFKITIRK…EFVLLTSKKN (94 aa).

It is found in the nucleus. This is B3 domain-containing protein At3g17010 from Arabidopsis thaliana (Mouse-ear cress).